The primary structure comprises 943 residues: U3 small nucleolar RNA-associated protein 12 (943 aa).

WD repeat units lie at residues 77–107 (AKPAECTYLEAHKDTDLLAVGYADGVIKVWD), 119–149 (GHKAAITLLQFDGTGTRLISGSKDSNIIVWD), 161–190 (SHKDSITGFWCQGEDWLISTSKDGMIKLWD), 202–230 (AHTGECWGLAVKDDLLITTGTDSQVKIWK), 389–418 (GQRTDVRSIDISDDNKLLATASNGSLKIWN), 428–458 (FECGYALTCKFLPGGLLVILGTRNGELQLFD), 471–501 (AHDAAIWSLDLTSDGKRLVTGSADKTVKFWD), 571–601 (GHKLPVLSIDISFDSKMIITSSADKNIKIWG), 613–643 (AHQDSIMNVKFLPQSHNFFSCSKDAVVKYWD), and 655–685 (AHQSEVWALAVATDGGFVVSSSHDHSIRIWE). Residues 715 to 739 (EGNGDDAFKADASGEGVEDEASGVH) form a disordered region.

This sequence belongs to the WD repeat WDR3/UTP12 family. As to quaternary structure, interacts with snoRNA U3. Interacts with MPP10. Component of the ribosomal small subunit (SSU) processome composed of at least 40 protein subunits and snoRNA U3.

It localises to the nucleus. It is found in the nucleolus. Functionally, involved in nucleolar processing of pre-18S ribosomal RNA. The sequence is that of U3 small nucleolar RNA-associated protein 12 (DIP2) from Saccharomyces cerevisiae (strain ATCC 204508 / S288c) (Baker's yeast).